The primary structure comprises 985 residues: UPF0182 protein Cgl0786/cg0896 (985 aa).

7 consecutive transmembrane segments (helical) span residues Val-19–Phe-39, Ile-63–Phe-83, Val-115–Trp-135, Ser-176–Ile-196, Thr-215–Asp-235, Lys-262–Leu-282, and Leu-290–Leu-310. The segment at Lys-904–Glu-944 is disordered. Residues Asp-929–Pro-939 are compositionally biased toward low complexity.

This sequence belongs to the UPF0182 family.

The protein resides in the cell membrane. In Corynebacterium glutamicum (strain ATCC 13032 / DSM 20300 / JCM 1318 / BCRC 11384 / CCUG 27702 / LMG 3730 / NBRC 12168 / NCIMB 10025 / NRRL B-2784 / 534), this protein is UPF0182 protein Cgl0786/cg0896.